Reading from the N-terminus, the 130-residue chain is Small ribosomal subunit protein uS11 (130 aa).

Belongs to the universal ribosomal protein uS11 family. As to quaternary structure, part of the 30S ribosomal subunit. Interacts with proteins S7 and S18. Binds to IF-3.

Located on the platform of the 30S subunit, it bridges several disparate RNA helices of the 16S rRNA. Forms part of the Shine-Dalgarno cleft in the 70S ribosome. The protein is Small ribosomal subunit protein uS11 of Prochlorococcus marinus (strain NATL2A).